Here is a 128-residue protein sequence, read N- to C-terminus: Probable cystatin-15 (128 aa).

Positions 1 to 20 (MFWKLPLLLGLLALGPHVCS) are cleaved as a signal peptide. A disulfide bond links C82 and C92. The N-linked (GlcNAc...) asparagine glycan is linked to N104. C105 and C125 are oxidised to a cystine.

This sequence belongs to the cystatin family.

It is found in the secreted. The chain is Probable cystatin-15 from Bos taurus (Bovine).